A 215-amino-acid chain; its full sequence is Cytochrome b6 (215 aa).

The helical transmembrane segment at 32-52 (IFYCLGGITLTCFLVQVATGF) threads the bilayer. Cys-35 lines the heme c pocket. Positions 86 and 100 each coordinate heme b. A run of 3 helical transmembrane segments spans residues 90 to 110 (ASMMVLMMILHVFRVYLTGGF), 116 to 136 (LTWVTGVVLGVLTASFGVTGY), and 186 to 206 (LHTFVLPLLTAVFMLMHFLMI). His-187 and His-202 together coordinate heme b.

The protein belongs to the cytochrome b family. PetB subfamily. The 4 large subunits of the cytochrome b6-f complex are cytochrome b6, subunit IV (17 kDa polypeptide, PetD), cytochrome f and the Rieske protein, while the 4 small subunits are PetG, PetL, PetM and PetN. The complex functions as a dimer. Requires heme b as cofactor. Heme c serves as cofactor.

Its subcellular location is the plastid. The protein localises to the chloroplast thylakoid membrane. Functionally, component of the cytochrome b6-f complex, which mediates electron transfer between photosystem II (PSII) and photosystem I (PSI), cyclic electron flow around PSI, and state transitions. The polypeptide is Cytochrome b6 (Gossypium barbadense (Sea Island cotton)).